Here is a 374-residue protein sequence, read N- to C-terminus: UDP-N-acetylglucosamine--N-acetylmuramyl-(pentapeptide) pyrophosphoryl-undecaprenol N-acetylglucosamine transferase (374 aa).

UDP-N-acetyl-alpha-D-glucosamine-binding positions include 13 to 15, N124, R165, S193, and Q294; that span reads TGG.

The protein belongs to the glycosyltransferase 28 family. MurG subfamily.

It is found in the cell inner membrane. It catalyses the reaction di-trans,octa-cis-undecaprenyl diphospho-N-acetyl-alpha-D-muramoyl-L-alanyl-D-glutamyl-meso-2,6-diaminopimeloyl-D-alanyl-D-alanine + UDP-N-acetyl-alpha-D-glucosamine = di-trans,octa-cis-undecaprenyl diphospho-[N-acetyl-alpha-D-glucosaminyl-(1-&gt;4)]-N-acetyl-alpha-D-muramoyl-L-alanyl-D-glutamyl-meso-2,6-diaminopimeloyl-D-alanyl-D-alanine + UDP + H(+). Its pathway is cell wall biogenesis; peptidoglycan biosynthesis. In terms of biological role, cell wall formation. Catalyzes the transfer of a GlcNAc subunit on undecaprenyl-pyrophosphoryl-MurNAc-pentapeptide (lipid intermediate I) to form undecaprenyl-pyrophosphoryl-MurNAc-(pentapeptide)GlcNAc (lipid intermediate II). This chain is UDP-N-acetylglucosamine--N-acetylmuramyl-(pentapeptide) pyrophosphoryl-undecaprenol N-acetylglucosamine transferase, found in Rhizobium meliloti (strain 1021) (Ensifer meliloti).